A 534-amino-acid chain; its full sequence is Flavonoid-6-hydroxylase (534 aa).

A helical transmembrane segment spans residues 3 to 23 (FISFVYTLIAFSSLLYFYLIW). Residue C467 coordinates heme.

This sequence belongs to the cytochrome P450 family. Requires heme as cofactor. In terms of tissue distribution, expressed in leaves.

The protein resides in the membrane. It carries out the reaction genkwanin + reduced [NADPH--hemoprotein reductase] + O2 = scutellarein 7-methyl ether + oxidized [NADPH--hemoprotein reductase] + H2O. It catalyses the reaction (2S)-sakuranetin + reduced [NADPH--hemoprotein reductase] + O2 = (2S)-7-methylcarthamidin + oxidized [NADPH--hemoprotein reductase] + H2O + H(+). The enzyme catalyses apigenin 4',7-dimethyl ether + reduced [NADPH--hemoprotein reductase] + O2 = ladanein + oxidized [NADPH--hemoprotein reductase] + H2O + H(+). The catalysed reaction is (2S)-naringenin 4',7-dimethyl ether + reduced [NADPH--hemoprotein reductase] + O2 = (2S)-carthamidin-4',7-dimethyl ether + oxidized [NADPH--hemoprotein reductase] + H2O + H(+). It participates in flavonoid metabolism. Hydroxylase involved in the biosynthesis of polymethoxylated flavonoids natural products such as nevadensin and salvigenin, aroma compounds which contribute to the flavor of sweet basil, and exhibit pharmacological activities such as anti-allergic, anti-oxidant, antibacterial, anti-proliferative, and anti-inflammatory effects. Catalyzes the 6-hydroxylation of 7-O-methylated precursors such as the conversion of genkwanin (GENK) to scutellarein-7-methyl ether (SCU7Me). Can also use, with a lower efficiency, apigenin-7,4'-dimethyl ether (AdM), naringenin-7-methyl ether (SAK) and naringenin-7,4'-dimethyl ether (NdM) as substrates. The sequence is that of Flavonoid-6-hydroxylase from Ocimum basilicum (Sweet basil).